A 130-amino-acid chain; its full sequence is MAPSAKRSGPRKQKRNVPSGVAHIQSTFNNTIVSITDPNGEVIAWASAGSSGFKGAKKGTPFAAQTAADNAARRAIDQGMRQIEVMVSGPGSGRETAIRALQAAGLEITLIRDVTPIPHNGCRPPKRRRV.

It belongs to the universal ribosomal protein uS11 family. In terms of assembly, part of the 30S ribosomal subunit. Interacts with proteins S7 and S18. Binds to IF-3.

Its function is as follows. Located on the platform of the 30S subunit, it bridges several disparate RNA helices of the 16S rRNA. Forms part of the Shine-Dalgarno cleft in the 70S ribosome. This is Small ribosomal subunit protein uS11 from Thermosynechococcus vestitus (strain NIES-2133 / IAM M-273 / BP-1).